The following is a 381-amino-acid chain: DNA replication and repair protein RecF (381 aa).

ATP is bound at residue 30-37 (GENAQGKT).

It belongs to the RecF family.

It is found in the cytoplasm. In terms of biological role, the RecF protein is involved in DNA metabolism; it is required for DNA replication and normal SOS inducibility. RecF binds preferentially to single-stranded, linear DNA. It also seems to bind ATP. This chain is DNA replication and repair protein RecF, found in Lactobacillus delbrueckii subsp. bulgaricus (strain ATCC BAA-365 / Lb-18).